Here is a 91-residue protein sequence, read N- to C-terminus: Early E3B 10.4 kDa protein (91 aa).

Positions 1-22 (MIPRVFILLTLVALFCACSTLA) are cleaved as a signal peptide. The Lumenal portion of the chain corresponds to 23–34 (AVSHIEVDCIPA). A helical membrane pass occupies residues 35-60 (FTVYLLYGFVTLTLICSLITVVIAFI). Topologically, residues 61–91 (QCIDWVCVRFAYLRHHPQYRDRTIAELLRIL) are cytoplasmic.

Belongs to the adenoviridae E3B family.

It is found in the host endoplasmic reticulum membrane. In terms of biological role, down-regulates the EGF receptor. The protein is Early E3B 10.4 kDa protein of Homo sapiens (Human).